A 487-amino-acid chain; its full sequence is UDP-N-acetylmuramate--L-alanine ligase (487 aa).

Residue glycine 126–threonine 132 participates in ATP binding.

The protein belongs to the MurCDEF family.

Its subcellular location is the cytoplasm. It catalyses the reaction UDP-N-acetyl-alpha-D-muramate + L-alanine + ATP = UDP-N-acetyl-alpha-D-muramoyl-L-alanine + ADP + phosphate + H(+). Its pathway is cell wall biogenesis; peptidoglycan biosynthesis. In terms of biological role, cell wall formation. This chain is UDP-N-acetylmuramate--L-alanine ligase, found in Proteus mirabilis (strain HI4320).